The chain runs to 480 residues: Aspartyl/glutamyl-tRNA(Asn/Gln) amidotransferase subunit B (480 aa).

Belongs to the GatB/GatE family. GatB subfamily. In terms of assembly, heterotrimer of A, B and C subunits.

The enzyme catalyses L-glutamyl-tRNA(Gln) + L-glutamine + ATP + H2O = L-glutaminyl-tRNA(Gln) + L-glutamate + ADP + phosphate + H(+). It carries out the reaction L-aspartyl-tRNA(Asn) + L-glutamine + ATP + H2O = L-asparaginyl-tRNA(Asn) + L-glutamate + ADP + phosphate + 2 H(+). Functionally, allows the formation of correctly charged Asn-tRNA(Asn) or Gln-tRNA(Gln) through the transamidation of misacylated Asp-tRNA(Asn) or Glu-tRNA(Gln) in organisms which lack either or both of asparaginyl-tRNA or glutaminyl-tRNA synthetases. The reaction takes place in the presence of glutamine and ATP through an activated phospho-Asp-tRNA(Asn) or phospho-Glu-tRNA(Gln). In Saccharophagus degradans (strain 2-40 / ATCC 43961 / DSM 17024), this protein is Aspartyl/glutamyl-tRNA(Asn/Gln) amidotransferase subunit B.